Here is a 146-residue protein sequence, read N- to C-terminus: Ferredoxin-thioredoxin reductase catalytic chain, chloroplastic (146 aa).

The transit peptide at 1-31 (MNLQAVSCSFGFLSSPLGVTPRTSFRRFVIR) directs the protein to the chloroplast. Cys-85 provides a ligand contact to [4Fe-4S] cluster. Cys-87 serves as the catalytic Nucleophile. Cysteines 87 and 117 form a disulfide. The [4Fe-4S] cluster site is built by Cys-104, Cys-106, and Cys-115.

This sequence belongs to the ferredoxin thioredoxin reductase beta subunit family. Heterodimer of subunit A (variable subunit) and subunit B (catalytic subunit). Heterodimeric FTR forms a complex with ferredoxin and thioredoxin. [4Fe-4S] cluster serves as cofactor.

The protein localises to the plastid. It localises to the chloroplast. The catalysed reaction is [thioredoxin]-disulfide + 2 reduced [2Fe-2S]-[ferredoxin] + 2 H(+) = [thioredoxin]-dithiol + 2 oxidized [2Fe-2S]-[ferredoxin]. Functionally, catalytic subunit of the ferredoxin-thioredoxin reductase (FTR), which catalyzes the two-electron reduction of thioredoxins by the electrons provided by reduced ferredoxin. The protein is Ferredoxin-thioredoxin reductase catalytic chain, chloroplastic of Arabidopsis thaliana (Mouse-ear cress).